A 278-amino-acid chain; its full sequence is Indole-3-glycerol phosphate synthase (278 aa).

It belongs to the TrpC family.

It catalyses the reaction 1-(2-carboxyphenylamino)-1-deoxy-D-ribulose 5-phosphate + H(+) = (1S,2R)-1-C-(indol-3-yl)glycerol 3-phosphate + CO2 + H2O. It participates in amino-acid biosynthesis; L-tryptophan biosynthesis; L-tryptophan from chorismate: step 4/5. This Pseudomonas fluorescens (strain ATCC BAA-477 / NRRL B-23932 / Pf-5) protein is Indole-3-glycerol phosphate synthase.